The chain runs to 350 residues: Purine-rich element-binding protein gamma (350 aa).

Disordered regions lie at residues 1 to 59 (MERA…GTSE) and 136 to 172 (GHRQ…HPHS). Residues 9-27 (GGGSGGGRGRGGKNVGGPG) are compositionally biased toward gly residues. The segment covering 47–59 (ASATPNQSGGTSE) has biased composition (polar residues). Residues 54–296 (SGGTSEIQEL…GIFLKVSEVR (243 aa)) mediate DNA binding. Basic and acidic residues predominate over residues 137–149 (HRQEHGQSKEQVS). A phosphoserine mark is found at serine 163, serine 166, and serine 342.

This sequence belongs to the PUR DNA-binding protein family. Isoform 1 is expressed in testis. Isoform 2 is expressed in blastocyst and kidney.

It localises to the nucleus. This Mus musculus (Mouse) protein is Purine-rich element-binding protein gamma (Purg).